The sequence spans 363 residues: MGNTFGHLFRITTFGESHGGGVGVIIDGCPPRLDLSESDIQGDLDRRRPGQSKITTPRKETDTCEIISGVFQGKTLGTPIAILVRNKDARSQDYNEMSVKFRPSHADATYEAKYGIRNWQGGGRSSARETIGRVAAGAIAKKILKQVANVEIVGYVKRIKDLEGNVNPDTVTLEEVESNIVRCPDADMAEKMIDLIDQTRRDKDSIGGVVECVARYVPRGLGEPVFDKLEADLAKAVMSLPASKGFEIGSGFAGTLLTGSEHNDEFYIDDNGNIRTKTNRSGGIQGGISNGEHIIIRVAFKPTATIGKEQKTVTSESEETTLAAKGRHDPCVLSRAVPMVEAMVALVLCDHLLRWQGQCQVLT.

Residues 36–58 are disordered; sequence SESDIQGDLDRRRPGQSKITTPR. Arg47 is a binding site for NADP(+). Residues 124–126, Gly286, 301–305, and Arg327 contribute to the FMN site; these read RSS and KPTAT.

Belongs to the chorismate synthase family. As to quaternary structure, homotetramer. FMNH2 serves as cofactor.

The catalysed reaction is 5-O-(1-carboxyvinyl)-3-phosphoshikimate = chorismate + phosphate. It functions in the pathway metabolic intermediate biosynthesis; chorismate biosynthesis; chorismate from D-erythrose 4-phosphate and phosphoenolpyruvate: step 7/7. Catalyzes the anti-1,4-elimination of the C-3 phosphate and the C-6 proR hydrogen from 5-enolpyruvylshikimate-3-phosphate (EPSP) to yield chorismate, which is the branch point compound that serves as the starting substrate for the three terminal pathways of aromatic amino acid biosynthesis. This reaction introduces a second double bond into the aromatic ring system. The polypeptide is Chorismate synthase (Crocosphaera subtropica (strain ATCC 51142 / BH68) (Cyanothece sp. (strain ATCC 51142))).